The primary structure comprises 382 residues: Mannitol-1-phosphate 5-dehydrogenase (382 aa).

4-15 contacts NAD(+); that stretch reads AVHFGAGNIGRG.

The protein belongs to the mannitol dehydrogenase family. In terms of assembly, monomer.

The enzyme catalyses D-mannitol 1-phosphate + NAD(+) = beta-D-fructose 6-phosphate + NADH + H(+). The chain is Mannitol-1-phosphate 5-dehydrogenase (mtlD) from Streptococcus mutans serotype c (strain ATCC 700610 / UA159).